We begin with the raw amino-acid sequence, 227 residues long: Orotidine 5'-phosphate decarboxylase (227 aa).

Residues Asp8, Lys30, 59–68, Thr118, Arg178, Gln187, Gly207, and Arg208 each bind substrate; that span reads DLKLYDIPYT. Residue Lys61 is the Proton donor of the active site.

The protein belongs to the OMP decarboxylase family. Type 1 subfamily. Homodimer.

The catalysed reaction is orotidine 5'-phosphate + H(+) = UMP + CO2. Its pathway is pyrimidine metabolism; UMP biosynthesis via de novo pathway; UMP from orotate: step 2/2. Its function is as follows. Catalyzes the decarboxylation of orotidine 5'-monophosphate (OMP) to uridine 5'-monophosphate (UMP). This Helicobacter pylori (strain ATCC 700392 / 26695) (Campylobacter pylori) protein is Orotidine 5'-phosphate decarboxylase.